A 148-amino-acid polypeptide reads, in one-letter code: Snaclec 6 (148 aa).

The first 23 residues, 1–23 (MGRFIFVSFGLLVMFLSLSGTEA), serve as a signal peptide directing secretion. Cystine bridges form between Cys-27–Cys-38, Cys-55–Cys-144, and Cys-121–Cys-136. The C-type lectin domain occupies 34-145 (YDQNCYKAFE…CSGTHNFVCK (112 aa)). Residue Asn-130 is glycosylated (N-linked (GlcNAc...) asparagine).

It belongs to the snaclec family. In terms of assembly, heterodimer; disulfide-linked. As to expression, expressed by the venom gland.

The protein localises to the secreted. Interferes with one step of hemostasis (modulation of platelet aggregation, or coagulation cascade, for example). This chain is Snaclec 6, found in Bitis arietans (African puff adder).